A 408-amino-acid chain; its full sequence is Acetylornithine aminotransferase (408 aa).

Pyridoxal 5'-phosphate contacts are provided by residues 107-108 (GT) and Phe-141. Arg-144 is a N(2)-acetyl-L-ornithine binding site. 227-230 (DEIQ) lines the pyridoxal 5'-phosphate pocket. The residue at position 256 (Lys-256) is an N6-(pyridoxal phosphate)lysine. Position 284 (Thr-284) interacts with N(2)-acetyl-L-ornithine. A pyridoxal 5'-phosphate-binding site is contributed by Thr-285.

Belongs to the class-III pyridoxal-phosphate-dependent aminotransferase family. ArgD subfamily. In terms of assembly, homodimer. Pyridoxal 5'-phosphate is required as a cofactor.

It is found in the cytoplasm. The enzyme catalyses N(2)-acetyl-L-ornithine + 2-oxoglutarate = N-acetyl-L-glutamate 5-semialdehyde + L-glutamate. It participates in amino-acid biosynthesis; L-arginine biosynthesis; N(2)-acetyl-L-ornithine from L-glutamate: step 4/4. The polypeptide is Acetylornithine aminotransferase (Xanthomonas campestris pv. campestris (strain ATCC 33913 / DSM 3586 / NCPPB 528 / LMG 568 / P 25)).